The chain runs to 155 residues: Deoxyuridine 5'-triphosphate nucleotidohydrolase (155 aa).

Substrate contacts are provided by residues 74 to 76 (RSG), asparagine 87, and 91 to 93 (LID).

This sequence belongs to the dUTPase family. Mg(2+) is required as a cofactor.

The catalysed reaction is dUTP + H2O = dUMP + diphosphate + H(+). It functions in the pathway pyrimidine metabolism; dUMP biosynthesis; dUMP from dCTP (dUTP route): step 2/2. Its function is as follows. This enzyme is involved in nucleotide metabolism: it produces dUMP, the immediate precursor of thymidine nucleotides and it decreases the intracellular concentration of dUTP so that uracil cannot be incorporated into DNA. In Xanthomonas axonopodis pv. citri (strain 306), this protein is Deoxyuridine 5'-triphosphate nucleotidohydrolase.